The primary structure comprises 483 residues: MKTLNRRDFPGAQYPERIIQFGEGNFLRAFVDWQIDLLNEHTDLNSGVVVVRPIETSFPPSLSTQDGLYTTIIRGLNEKGEAVSDARLIRSVNREISVYSEYDEFLKLAHNPEMRFVFSNTTEAGISYHAGDKFDDAPAVSYPAKLTRLLFERFSHFNGALDKGWIIIPCELIDYNGDALRELVLRYAQEWALPEAFIQWLDQANSFCSTLVDRIVTGYPRDEVAKLEEELGYHDDFLDTAEHFYLFVIQGPKSLATELRLDKYPLNVLIVDDIKPYKERKVAILNGAHTALVPVAFQAGLDTVGEAMNDAEICAFVEKAIYEEIIPVLDLPRDELESFASAVTGRFRNPYIKHQLLSIALNGMTKFRTRILPQLLAGQKANGTLPARLTFALAALIAFYRGERNGETYPVQDDAHWLERYQQLWSQHRDRVIGTQELVAIVLAEKDHWEQDLTQVPGLVEQVANDLDAILEKGMREAVRPLC.

Position 18–29 (18–29 (IIQFGEGNFLRA)) interacts with NAD(+).

It belongs to the mannitol dehydrogenase family. UxaB subfamily.

It catalyses the reaction D-altronate + NAD(+) = keto-D-tagaturonate + NADH + H(+). The protein operates within carbohydrate metabolism; pentose and glucuronate interconversion. The sequence is that of Altronate oxidoreductase (uxaB) from Shigella flexneri.